Reading from the N-terminus, the 260-residue chain is Thrombin-like enzyme gloshedobin (260 aa).

Positions Met-1–Ala-18 are cleaved as a signal peptide. Positions Gln-19–Leu-24 are excised as a propeptide. One can recognise a Peptidase S1 domain in the interval Ile-25–Gly-252. Cystine bridges form between Cys-31–Cys-165, Cys-52–Cys-68, Cys-100–Cys-258, Cys-144–Cys-212, Cys-176–Cys-191, and Cys-202–Cys-227. Catalysis depends on charge relay system residues His-67 and Asp-112. 2 N-linked (GlcNAc...) asparagine glycosylation sites follow: Asn-123 and Asn-124. Ser-206 (charge relay system) is an active-site residue.

It belongs to the peptidase S1 family. Snake venom subfamily. As to quaternary structure, monomer. In terms of tissue distribution, expressed by the venom gland.

The protein resides in the secreted. Its activity is regulated as follows. Completely inhibited by PMSF, and N-tosyl-Lphenylalanine chloromethyl ketone (TPCK) and poorly inhibited by benzamidine and derivates. Not inhibited by EDTA, heparin and hirudin. Functionally, thrombin-like snake venom serine protease. The recombinant form clots fibrinogen by cleaving fibrinogen Aalpha chain (FGA), and slowly Bbeta chain (FGB). Has amidolytic activities. In Gloydius shedaoensis (Shedao island pit viper), this protein is Thrombin-like enzyme gloshedobin.